Here is a 370-residue protein sequence, read N- to C-terminus: Protein-glutamate methylesterase/protein-glutamine glutaminase of group 1 operon (370 aa).

Positions Lys-4–Leu-121 constitute a Response regulatory domain. Residue Asp-55 is modified to 4-aspartylphosphate. The segment covering Pro-150–Ala-180 has biased composition (low complexity). The disordered stretch occupies residues Pro-150 to Arg-183. Residues Pro-179–Val-370 form the CheB-type methylesterase domain. Catalysis depends on residues Ser-194, His-221, and Asp-314.

This sequence belongs to the CheB family. In terms of processing, phosphorylated by CheA. Phosphorylation of the N-terminal regulatory domain activates the methylesterase activity.

The protein localises to the cytoplasm. The enzyme catalyses [protein]-L-glutamate 5-O-methyl ester + H2O = L-glutamyl-[protein] + methanol + H(+). The catalysed reaction is L-glutaminyl-[protein] + H2O = L-glutamyl-[protein] + NH4(+). Involved in chemotaxis. Part of a chemotaxis signal transduction system that modulates chemotaxis in response to various stimuli. Catalyzes the demethylation of specific methylglutamate residues introduced into the chemoreceptors (methyl-accepting chemotaxis proteins or MCP) by CheR. Also mediates the irreversible deamidation of specific glutamine residues to glutamic acid. This chain is Protein-glutamate methylesterase/protein-glutamine glutaminase of group 1 operon, found in Pseudomonas putida (strain ATCC 47054 / DSM 6125 / CFBP 8728 / NCIMB 11950 / KT2440).